Consider the following 95-residue polypeptide: Glutamyl-tRNA(Gln) amidotransferase subunit C (95 aa).

It belongs to the GatC family. As to quaternary structure, heterotrimer of A, B and C subunits.

It carries out the reaction L-glutamyl-tRNA(Gln) + L-glutamine + ATP + H2O = L-glutaminyl-tRNA(Gln) + L-glutamate + ADP + phosphate + H(+). The enzyme catalyses L-aspartyl-tRNA(Asn) + L-glutamine + ATP + H2O = L-asparaginyl-tRNA(Asn) + L-glutamate + ADP + phosphate + 2 H(+). Its function is as follows. Allows the formation of correctly charged Asn-tRNA(Asn) or Gln-tRNA(Gln) through the transamidation of misacylated Asp-tRNA(Asn) or Glu-tRNA(Gln) in organisms which lack either or both of asparaginyl-tRNA or glutaminyl-tRNA synthetases. The reaction takes place in the presence of glutamine and ATP through an activated phospho-Asp-tRNA(Asn) or phospho-Glu-tRNA(Gln). The chain is Glutamyl-tRNA(Gln) amidotransferase subunit C from Caulobacter vibrioides (strain ATCC 19089 / CIP 103742 / CB 15) (Caulobacter crescentus).